A 622-amino-acid chain; its full sequence is 1-deoxy-D-xylulose-5-phosphate synthase (622 aa).

Thiamine diphosphate is bound by residues His80 and 121–123; that span reads GHS. Asp152 lines the Mg(2+) pocket. Residues 153–154, Asn181, Tyr288, and Glu370 contribute to the thiamine diphosphate site; that span reads GA. Mg(2+) is bound at residue Asn181.

It belongs to the transketolase family. DXPS subfamily. As to quaternary structure, homodimer. Mg(2+) is required as a cofactor. Requires thiamine diphosphate as cofactor.

It carries out the reaction D-glyceraldehyde 3-phosphate + pyruvate + H(+) = 1-deoxy-D-xylulose 5-phosphate + CO2. The protein operates within metabolic intermediate biosynthesis; 1-deoxy-D-xylulose 5-phosphate biosynthesis; 1-deoxy-D-xylulose 5-phosphate from D-glyceraldehyde 3-phosphate and pyruvate: step 1/1. Catalyzes the acyloin condensation reaction between C atoms 2 and 3 of pyruvate and glyceraldehyde 3-phosphate to yield 1-deoxy-D-xylulose-5-phosphate (DXP). In Shewanella oneidensis (strain ATCC 700550 / JCM 31522 / CIP 106686 / LMG 19005 / NCIMB 14063 / MR-1), this protein is 1-deoxy-D-xylulose-5-phosphate synthase.